The chain runs to 166 residues: MFPMVTEFMNYGQQTVRAARYIGQGFIITLSHANRLPVTIQYPYEKLITSERFRGRIHFEFDKCIACEVCVRVCPIDLPVVDWKLETDIRKKRLLNYSIDFGICIFCGNCVEYCPTNCLSMTEEYELSTYDRHELNYNQIALGRLPMSIIDDYTIRTIFNLPEIKT.

2 4Fe-4S ferredoxin-type domains span residues 55–84 (GRIHFEFDKCIACEVCVRVCPIDLPVVDWK) and 95–124 (LNYSIDFGICIFCGNCVEYCPTNCLSMTEE). Cys64, Cys67, Cys70, Cys74, Cys104, Cys107, Cys110, and Cys114 together coordinate [4Fe-4S] cluster.

The protein belongs to the complex I 23 kDa subunit family. In terms of assembly, NDH is composed of at least 16 different subunits, 5 of which are encoded in the nucleus. It depends on [4Fe-4S] cluster as a cofactor.

The protein localises to the plastid. It is found in the chloroplast thylakoid membrane. It catalyses the reaction a plastoquinone + NADH + (n+1) H(+)(in) = a plastoquinol + NAD(+) + n H(+)(out). The enzyme catalyses a plastoquinone + NADPH + (n+1) H(+)(in) = a plastoquinol + NADP(+) + n H(+)(out). NDH shuttles electrons from NAD(P)H:plastoquinone, via FMN and iron-sulfur (Fe-S) centers, to quinones in the photosynthetic chain and possibly in a chloroplast respiratory chain. The immediate electron acceptor for the enzyme in this species is believed to be plastoquinone. Couples the redox reaction to proton translocation, and thus conserves the redox energy in a proton gradient. The sequence is that of NAD(P)H-quinone oxidoreductase subunit I, chloroplastic from Calea megacephala.